Here is a 92-residue protein sequence, read N- to C-terminus: Acylphosphatase (92 aa).

An Acylphosphatase-like domain is found at 5–90; sequence TYRLVICGLV…GDFVGFQLRE (86 aa). Active-site residues include Arg20 and Asn38.

This sequence belongs to the acylphosphatase family.

It catalyses the reaction an acyl phosphate + H2O = a carboxylate + phosphate + H(+). The protein is Acylphosphatase (acyP) of Albidiferax ferrireducens (strain ATCC BAA-621 / DSM 15236 / T118) (Rhodoferax ferrireducens).